We begin with the raw amino-acid sequence, 460 residues long: MASITRDIFKAYDIRGIVGKTLTDDAAYFIGRAIAAKAAEKGIARIALGRDGRLSGPELMEHIQRGLTDSGISVLNVGMVTTPMLYFAAVNECGGSGVMITGSHNPPDYNGFKMMLGGDTLAGEAIQELLAIVEKDGFVAADKQGSVTEKDISGAYHDHIVGHVKLKRPINIAIDAGNGVGGAFAGKLYKGLGNEVTELFCEVDGNFPNHHPDPSKPENLQDLIAALKNGDAEIGLAFDGDADRLGVVTKDGNIIYPDRQLMLFAQDVLNRNPGAKVIFDVKSTRLLAPWIKEHGGEAIMEKTGHSFIKSAMKKTGALVAGEMSGHVFFKERWFGFDDGLYAGARLLEILSASDNPSEVLDNLPQSISTPELNISLPEGSNGHQVIEELAAKAEFEGATEIITIDGLRVEFPDGFGLMRASNTTPILVLRFEADTQAAIERIQNRFKAVIESNPHLIWPL.

The Phosphoserine intermediate role is filled by Ser103. Ser103 contacts Mg(2+). Residues 103 to 104 (SH) and Lys113 each bind substrate. 3 residues coordinate Mg(2+): Asp239, Asp241, and Asp243. Substrate contacts are provided by residues 243–244 (DR), Thr303, and 322–324 (EMS).

Belongs to the phosphohexose mutase family. Requires Mg(2+) as cofactor.

It localises to the cytoplasm. It carries out the reaction alpha-D-glucose 1-phosphate = alpha-D-glucose 6-phosphate. In terms of biological role, this enzyme participates in both the breakdown and synthesis of glucose. This chain is Phosphoglucomutase (pgm), found in Neisseria gonorrhoeae.